A 284-amino-acid chain; its full sequence is 2-dehydro-3-deoxyphosphooctonate aldolase (284 aa).

This sequence belongs to the KdsA family.

Its subcellular location is the cytoplasm. The catalysed reaction is D-arabinose 5-phosphate + phosphoenolpyruvate + H2O = 3-deoxy-alpha-D-manno-2-octulosonate-8-phosphate + phosphate. Its pathway is carbohydrate biosynthesis; 3-deoxy-D-manno-octulosonate biosynthesis; 3-deoxy-D-manno-octulosonate from D-ribulose 5-phosphate: step 2/3. The protein operates within bacterial outer membrane biogenesis; lipopolysaccharide biosynthesis. The protein is 2-dehydro-3-deoxyphosphooctonate aldolase of Sodalis glossinidius (strain morsitans).